The primary structure comprises 63 residues: Cecropin-2 (63 aa).

The first 21 residues, 1–21 (MNFNKVLVLLAVIFAVFAGQT), serve as a signal peptide directing secretion. Residues 22–23 (EA) constitute a propeptide that is removed on maturation. K62 is subject to Lysine amide.

This sequence belongs to the cecropin family.

The protein localises to the secreted. Its function is as follows. Cecropins have lytic and antibacterial activity against several Gram-positive and Gram-negative bacteria. This is Cecropin-2 (CEC2) from Ceratitis capitata (Mediterranean fruit fly).